A 2610-amino-acid chain; its full sequence is E3 ubiquitin-protein ligase HECTD1 (2610 aa).

The disordered stretch occupies residues 246-269 (TVSGPSSACKPGRSTTGAPSTTAD). Residues 258–269 (RSTTGAPSTTAD) show a composition bias toward polar residues. 4 ANK repeats span residues 395–424 (VGQTLLNWASAFGTQEMVEFLCERGADVNR), 426–455 (QRSSSLHYAACFGRPQVAKTLLRHGANPDL), 459–491 (DGKTPLDKARERGHSEVVAILQSPGDWMCPVNK), and 579–612 (ITATVLDQEDDDDGHLLALQIIRDLVDKGGDIFL). A disordered region spans residues 489 to 513 (VNKGDDKKKKDTNKDEEECNEPKGD). Residues 491–501 (KGDDKKKKDTN) are compositionally biased toward basic and acidic residues. Disordered stretches follow at residues 627-657 (LAGPSSDDENEEESKPEKEDEPQEDAKELQQ) and 707-748 (SSGS…LSAP). 2 positions are modified to phosphoserine: S631 and S640. Basic and acidic residues predominate over residues 639–657 (ESKPEKEDEPQEDAKELQQ). The span at 707–717 (SSGSPEGGSDS) shows a compositional bias: low complexity. Residues 718–729 (SESRSEFLEKLQ) show a composition bias toward basic and acidic residues. In terms of domain architecture, MIB/HERC2 spans 1266 to 1338 (VRSQVLKYMV…KFDLKLAPGY (73 aa)). Disordered stretches follow at residues 1343–1406 (VASP…KTER) and 1433–1483 (ENVP…SMGI). A compositionally biased stretch (polar residues) spans 1348–1365 (PVSSTVSGTTQSWSSLVK). 2 stretches are compositionally biased toward low complexity: residues 1373–1395 (SAAAGSSSRKGSSSSVCSVASSS) and 1441–1458 (GSSSSASTSTLTAETGSE). S1384 carries the phosphoserine modification. A compositionally biased stretch (polar residues) spans 1469-1479 (SVRTPGESSAI). At S1488 the chain carries Phosphoserine. The interval 1496–1515 (ELTNKEAASQRPLSSSASNR) is disordered. Phosphoserine is present on S1567. 2 disordered regions span residues 1592–1611 (GAQSFPNLTTPGTTSTVTMS) and 1674–1757 (ELDD…KGGR). Positions 1600-1611 (TTPGTTSTVTMS) are enriched in low complexity. The span at 1674-1703 (ELDDDEDLPEPDEEDDENEDDNQEDQEYEE) shows a compositional bias: acidic residues. T1760 carries the phosphothreonine modification. Residue S1772 is modified to Phosphoserine. Residues 1777–1797 (AFDPRPGRTNVQQTTDLEIPP) are disordered. The K-box stretch occupies residues 2029–2103 (FTFPPDEFTS…AIVWLQNRRE (75 aa)). Residues 2151–2610 (IHADRKSVLE…ATMEKGFHLN (460 aa)) enclose the HECT domain. Residues 2297-2318 (HCTESQSEASTEEGHDSLSVGS) form a disordered region. Phosphoserine is present on S2318. C2579 acts as the Glycyl thioester intermediate in catalysis.

It belongs to the UPL family. K-HECT subfamily. As to quaternary structure, interacts with IGSF1.

The enzyme catalyses S-ubiquitinyl-[E2 ubiquitin-conjugating enzyme]-L-cysteine + [acceptor protein]-L-lysine = [E2 ubiquitin-conjugating enzyme]-L-cysteine + N(6)-ubiquitinyl-[acceptor protein]-L-lysine.. Its pathway is protein modification; protein ubiquitination. Its function is as follows. E3 ubiquitin-protein ligase which accepts ubiquitin from an E2 ubiquitin-conjugating enzyme in the form of a thioester and then directly transfers the ubiquitin to targeted substrates. Mediates 'Lys-63'-linked polyubiquitination of HSP90AA1 which leads to its intracellular localization and reduced secretion. Negatively regulating HSP90AA1 secretion in cranial mesenchyme cells may impair their emigration and may be essential for the correct development of the cranial neural folds and neural tube closure. Catalyzes ubiquitination and degradation of ZNF622, an assembly factor for the ribosomal 60S subunit, in hematopoietic cells, thereby promoting hematopoietic stem cell renewal. In Homo sapiens (Human), this protein is E3 ubiquitin-protein ligase HECTD1.